Here is a 77-residue protein sequence, read N- to C-terminus: TSC22 domain family protein 3 (77 aa).

Methionine 1 bears the N-acetylmethionine mark. Positions 19 to 40 (LKEQIRELVEKNSQLERENTLL) are leucine-zipper. Positions 41–77 (KTLASPEQLEKFQSRLSPEEPAPETPEAPEAPGGSAV) are disordered. Serine 45 bears the Phosphoserine mark. The segment covering 68–77 (APEAPGGSAV) has biased composition (low complexity).

This sequence belongs to the TSC-22/Dip/Bun family. In terms of assembly, can form homodimers, however it is likely to function as a monomer. Interacts with AP1 and NFKB1. Interacts with MYOD1. Interacts with HDAC1; this interaction affects HDAC1 activity on MYOG promoter and thus inhibits MYOD1 transcriptional activity.

It localises to the cytoplasm. The protein resides in the nucleus. Protects T-cells from IL2 deprivation-induced apoptosis through the inhibition of FOXO3A transcriptional activity that leads to the down-regulation of the pro-apoptotic factor BCL2L11. In macrophages, plays a role in the anti-inflammatory and immunosuppressive effects of glucocorticoids and IL10. In T-cells, inhibits anti-CD3-induced NFKB1 nuclear translocation. In vitro, suppresses AP1 and NFKB1 DNA-binding activities. Inhibits myogenic differentiation and mediates anti-myogenic effects of glucocorticoids by binding and regulating MYOD1 and HDAC1 transcriptional activity resulting in reduced expression of MYOG. In Sus scrofa (Pig), this protein is TSC22 domain family protein 3 (TSC22D3).